We begin with the raw amino-acid sequence, 697 residues long: Exocyst complex component 7 (697 aa).

Residues 1–384 form an SEC8 and ARHQ binding region; that stretch reads MIPPQEASAR…FSTVLTVFPI (384 aa). 2 coiled-coil regions span residues 5–42 and 63–85; these read QEAS…TRNM and VHKQ…SCLD. Residue Ser-133 is modified to Phosphoserine. Residues 238–270 form a disordered region; the sequence is FRKSSSSSGVPYSPAIPNKRKDTPTKKPIKRPG.

Belongs to the EXO70 family. As to quaternary structure, the exocyst complex is composed of EXOC1, EXOC2, EXOC3, EXOC4, EXOC5, EXOC6, EXOC7 and EXOC8. Interacts with RAB11FIP3. Interacts with ARHQ in a GTP-dependent manner.

It localises to the cytoplasm. The protein localises to the cytosol. The protein resides in the cell membrane. It is found in the midbody. Its subcellular location is the midbody ring. Functionally, component of the exocyst complex involved in the docking of exocytic vesicles with fusion sites on the plasma membrane. In adipocytes, plays a crucial role in targeting SLC2A4 vesicle to the plasma membrane in response to insulin, perhaps directing the vesicle to the precise site of fusion. It is required for neuron survival and plays an essential role in cortical development. This chain is Exocyst complex component 7 (Exoc7), found in Mus musculus (Mouse).